The following is an 867-amino-acid chain: Cation/H(+) antiporter 23, chloroplastic (867 aa).

A run of 12 helical transmembrane segments spans residues 43 to 63, 75 to 95, 112 to 132, 146 to 166, 175 to 195, 212 to 232, 242 to 262, 283 to 303, 336 to 356, 362 to 382, 393 to 413, and 427 to 447; these read SGST…VANL, LYLP…PSVL, MVLE…LGLG, VIIA…LYYL, IISG…PDLA, AMCA…FGFA, KMMP…IFVI, HVWF…ACGV, GILM…GFML, FMMV…TVIT, AFAI…VLNA, and HMTI…AFAY. The interval 848-867 is disordered; it reads SMYEDEDEDDEEDHQYGIHR. The segment covering 851 to 860 has biased composition (acidic residues); it reads EDEDEDDEED.

Belongs to the monovalent cation:proton antiporter 2 (CPA2) transporter (TC 2.A.37) family. CHX (TC 2.A.37.4) subfamily. In terms of tissue distribution, specifically expressed in flower buds and pollen. Expressed in leaves, roots and stems.

The protein localises to the plastid. It is found in the chloroplast membrane. It localises to the endoplasmic reticulum membrane. In terms of biological role, operates as a K(+)/H(+) antiporter or Na(+)/H(+) antiporter of the chloroplast envelope that functions in pH homeostasis and chloroplast development. Monovalent cation transporter with a preference for Cs(+), K(+) and Rb(+) relative to Na(+) or Li(+). Required for pollen tube guidance, but not for normal pollen development. May also be involved in the development or function of the female gametophyte. The chain is Cation/H(+) antiporter 23, chloroplastic (CHX23) from Arabidopsis thaliana (Mouse-ear cress).